Consider the following 278-residue polypeptide: Orotidine 5'-phosphate decarboxylase (278 aa).

Lys95 (proton donor) is an active-site residue.

This sequence belongs to the OMP decarboxylase family. Type 2 subfamily.

The catalysed reaction is orotidine 5'-phosphate + H(+) = UMP + CO2. The protein operates within pyrimidine metabolism; UMP biosynthesis via de novo pathway; UMP from orotate: step 2/2. This is Orotidine 5'-phosphate decarboxylase from Mycobacterium ulcerans (strain Agy99).